The following is a 156-amino-acid chain: Endogenous retrovirus group K member 6 Pro protein (156 aa).

Residues 21 to 96 (FEGLVDTGAD…IPLNLWGRDL (76 aa)) enclose the Peptidase A2 domain. The active site involves Asp-26. Positions 111–156 (YSPTSQKIMTKMGYIPGKGLGKNEDGIKIPVEAKINQEREGIGNPC) constitute a G-patch domain.

It belongs to the peptidase A2 family. HERV class-II K(HML-2) subfamily. As to quaternary structure, active as a homodimer. Post-translationally, autoproteolytically processed at the N-terminus. Expected C-terminal autoprocessing not detected. The sequence shown is that of the processed Pro protein.

The enzyme catalyses Processing at the authentic HIV-1 PR recognition site and release of the mature p17 matrix and the p24 capsid protein, as a result of the cleavage of the -SQNY-|-PIVQ- cleavage site.. Functionally, retroviral proteases have roles in the processing of the primary translation products and the maturation of the viral particle. Endogenous Pro proteins may have kept, lost or modified their original function during evolution. In Homo sapiens (Human), this protein is Endogenous retrovirus group K member 6 Pro protein (ERVK-6).